Consider the following 332-residue polypeptide: Opticin (332 aa).

A signal peptide spans 1–19; the sequence is MRLLAFLSLLALVLQETGT. Residues 21-41 form a disordered region; sequence SLPRKERKRREEQMPREGDSF. Over residues 29-39 the composition is skewed to basic and acidic residues; that stretch reads RREEQMPREGD. Residues tyrosine 65 and tyrosine 71 each carry the sulfotyrosine modification. Residues 86-106 are disordered; it reads ATSISPAKSTTAPGTPSSNPT. The LRRNT domain occupies 116-153; sequence LLSSQPNHGLPTCLVCVCLGSSVYCDDIDLEDIPPLPR. Tyrosine 139 is subject to Sulfotyrosine. LRR repeat units lie at residues 154 to 175, 178 to 199, 202 to 223, 248 to 269, 270 to 290, and 300 to 320; these read RTAY…DFKG, KLKR…AFRL, ALQD…PSGI, KLQF…LPLS, LRSV…VFCD, and QLED…PSAY. Cysteines 289 and 322 form a disulfide. N-linked (GlcNAc...) asparagine glycosylation occurs at asparagine 312.

This sequence belongs to the small leucine-rich proteoglycan (SLRP) family. SLRP class III subfamily. Homodimer. Post-translationally, O-glycosylated. In terms of processing, proteolytically cleaved by MMP1, MMP2, MMP3, MMP7, MMP8, MMP9, ADAMTS4, and ADAMTS5. Proteolytically cleaved by MMP13. The degradation of OPTC by proteases may contribute to osteoarthritis pathophysiology. Sulfated on tyrosine residues. As to expression, expressed in cartilage and synovial membranes (at protein level). Expressed in the retina, iris, ligament, skin and fetal liver (at protein level). Expressed in the retinal pigment epithelium (at protein level). Expressed in synovial fibroblasts and subchondral bone osteoblasts.

It is found in the secreted. Its subcellular location is the extracellular space. The protein resides in the extracellular matrix. Its function is as follows. Inhibits angiogenesis in the vitreous humor of the eye, and therefore represses neovascularization. Binds collagen fibrils. May be involved in collagen fiber organization via regulation of other members of the small leucine-rich repeat proteoglycan superfamily. The chain is Opticin (OPTC) from Homo sapiens (Human).